Here is a 164-residue protein sequence, read N- to C-terminus: MTKLLLGFMGVGKTTVAAQLDEHFLDMDRLIEAKIGMSISAFFSYRGEAAFRKLESDTLQEVLALDNETIVSTGGGVVLSKANRELIRKNHKHNILLTASFEVLYDRLKKDRLCQRPLFLNHSKAEFYAIFQQRMALYEGLADKVINVEHRTPKEVAAIIANMS.

Position 10-15 (10-15 (GVGKTT)) interacts with ATP. Threonine 14 provides a ligand contact to Mg(2+). The substrate site is built by aspartate 28, arginine 52, and glycine 75. Residue arginine 116 participates in ATP binding. Residue arginine 134 coordinates substrate. Arginine 151 serves as a coordination point for ATP.

It belongs to the shikimate kinase family. In terms of assembly, monomer. Mg(2+) serves as cofactor.

It localises to the cytoplasm. The catalysed reaction is shikimate + ATP = 3-phosphoshikimate + ADP + H(+). The protein operates within metabolic intermediate biosynthesis; chorismate biosynthesis; chorismate from D-erythrose 4-phosphate and phosphoenolpyruvate: step 5/7. Functionally, catalyzes the specific phosphorylation of the 3-hydroxyl group of shikimic acid using ATP as a cosubstrate. The sequence is that of Shikimate kinase from Streptococcus equi subsp. zooepidemicus (strain MGCS10565).